The following is a 259-amino-acid chain: HTH-type transcriptional regulator Rv1931c (259 aa).

Residues 104 to 121 (SHRRHRPRAGTGRRRPRH) are compositionally biased toward basic residues. A disordered region spans residues 104-170 (SHRRHRPRAG…GAGGHRGRAG (67 aa)). One can recognise an HTH araC/xylS-type domain in the interval 174 to 257 (RIGELAQRAA…GISPDQYRKA (84 aa)). 2 consecutive DNA-binding regions (H-T-H motif) follow at residues 176-197 (GELAQRAAMSPRHFTRVFSDEV) and 224-247 (VVAIAARCGFGTAETMRRSFIRRV).

Its function is as follows. Controls the expression of genes important for virulence. The sequence is that of HTH-type transcriptional regulator Rv1931c from Mycobacterium tuberculosis (strain ATCC 25618 / H37Rv).